Consider the following 233-residue polypeptide: Cytidylate kinase (233 aa).

15–23 (GPSGAGKST) contributes to the ATP binding site. The span at 183–201 (RRDEQDSGREHAPLRRADD) shows a compositional bias: basic and acidic residues. Residues 183-202 (RRDEQDSGREHAPLRRADDA) are disordered.

Belongs to the cytidylate kinase family. Type 1 subfamily.

It localises to the cytoplasm. The enzyme catalyses CMP + ATP = CDP + ADP. It catalyses the reaction dCMP + ATP = dCDP + ADP. The chain is Cytidylate kinase from Geobacter sulfurreducens (strain ATCC 51573 / DSM 12127 / PCA).